Here is a 68-residue protein sequence, read N- to C-terminus: Sec-independent protein translocase protein TatA (68 aa).

The helical transmembrane segment at 1–21 (MGSFSIWHWLIVLAVVLLLFG) threads the bilayer. The segment at 42-68 (GMGDDEVASADKSVDGKTVDHKSDEVR) is disordered. The span at 53-68 (KSVDGKTVDHKSDEVR) shows a compositional bias: basic and acidic residues.

Belongs to the TatA/E family. As to quaternary structure, the Tat system comprises two distinct complexes: a TatABC complex, containing multiple copies of TatA, TatB and TatC subunits, and a separate TatA complex, containing only TatA subunits. Substrates initially bind to the TatABC complex, which probably triggers association of the separate TatA complex to form the active translocon.

It is found in the cell inner membrane. Its function is as follows. Part of the twin-arginine translocation (Tat) system that transports large folded proteins containing a characteristic twin-arginine motif in their signal peptide across membranes. TatA could form the protein-conducting channel of the Tat system. The protein is Sec-independent protein translocase protein TatA of Rhizobium meliloti (strain 1021) (Ensifer meliloti).